Consider the following 95-residue polypeptide: MKICGPKLSLCGLIISVWGIVQLVLMGLFFYINSVALIEDLPLEEEYHSLEDFYAAANRAYNQNAYNCWIAACIYVLTLLLSAQQFYMNSRVTAN.

2 helical membrane passes run 12–32 (GLII…FFYI) and 68–88 (CWIA…QFYM).

The protein belongs to the RNase K family.

It localises to the membrane. Functionally, endoribonuclease. (Microbial infection) Required for the initial stages of clathrin-mediated endocytic uptake of a diverse set of flaviviruses, including dengue and West Nile. Not required for clathrin-mediated endocytosis and macropinocytosis. This chain is Ribonuclease kappa, found in Drosophila melanogaster (Fruit fly).